A 381-amino-acid polypeptide reads, in one-letter code: Carbamoyl phosphate synthase small chain (381 aa).

The interval 1–192 is CPSase; the sequence is MSKPAILALE…SGYADVSQGD (192 aa). Residues Ser47, Gly244, and Gly246 each contribute to the L-glutamine site. The Glutamine amidotransferase type-1 domain occupies 196–381; it reads HVVAYDYGMK…RFVEMMRHRR (186 aa). Cys272 acts as the Nucleophile in catalysis. L-glutamine-binding residues include Leu273, Gln276, Asn314, Gly316, and Phe317. Residues His356 and Glu358 contribute to the active site.

Belongs to the CarA family. Composed of two chains; the small (or glutamine) chain promotes the hydrolysis of glutamine to ammonia, which is used by the large (or ammonia) chain to synthesize carbamoyl phosphate. Tetramer of heterodimers (alpha,beta)4.

The enzyme catalyses hydrogencarbonate + L-glutamine + 2 ATP + H2O = carbamoyl phosphate + L-glutamate + 2 ADP + phosphate + 2 H(+). It carries out the reaction L-glutamine + H2O = L-glutamate + NH4(+). Its pathway is amino-acid biosynthesis; L-arginine biosynthesis; carbamoyl phosphate from bicarbonate: step 1/1. The protein operates within pyrimidine metabolism; UMP biosynthesis via de novo pathway; (S)-dihydroorotate from bicarbonate: step 1/3. Small subunit of the glutamine-dependent carbamoyl phosphate synthetase (CPSase). CPSase catalyzes the formation of carbamoyl phosphate from the ammonia moiety of glutamine, carbonate, and phosphate donated by ATP, constituting the first step of 2 biosynthetic pathways, one leading to arginine and/or urea and the other to pyrimidine nucleotides. The small subunit (glutamine amidotransferase) binds and cleaves glutamine to supply the large subunit with the substrate ammonia. This Halomonas eurihalina protein is Carbamoyl phosphate synthase small chain.